The chain runs to 264 residues: Short chain dehydrogenase CPUR_05429 (264 aa).

Positions 24, 70, 97, and 130 each coordinate NADP(+). Residues Ser146 and Ser147 each act as proton donor in the active site. 3 residues coordinate NADP(+): Tyr161, Lys165, and Thr196. Tyr161 (proton acceptor) is an active-site residue. Residue Lys165 is the Lowers pKa of active site Tyr of the active site.

The protein belongs to the short-chain dehydrogenases/reductases (SDR) family.

It participates in pigment biosynthesis. Short chain dehydrogenase; part of the ergochrome gene cluster responsible for the typical purple-black color of the ergot sclerotia. The ergochrome gene cluster produces several ergot pigments including the yellow ergochrome secalonic acid and its derivatives, as well as the red anthraquinones endocrocin and clavorubin. The pathway begins with the synthesis of atrochrysone thioester by the polyketide synthase (PKS) CPUR_05437. The atrochrysone carboxyl ACP thioesterase CPUR_05436 then breaks the thioester bond and releases the atrochrysone carboxylic acid from CPUR_05437. The atrochrysone carboxylic acid is then converted to atrochrysone which is further transformed into emodin anthrone. The next step is performed by the anthrone oxygenase CPUR_05434 that catalyzes the oxidation of emodinanthrone to emodin. Emodin is further modified to yield monodictyphenone via several steps involving CPUR_05427, CPUR_05428, CPUR_05429 and CPUR_05430. The short chain dehydrogenase/reductase CPUR_05418 then catalyzes the C-5 ketoreduction to give the xanthone skeleton of the monomeric units. Ergochromes formation requires further dimerization steps of different xanthone units, probably catalyzed by the cytochrome P450 monooxygenase CPUR_05419. CPUR_05425, CPUR_05426 and CPUR_05431 are unique to Claviceps, thus it is likely that they are involved in further modification of xanthone units or in their dimerization. The yellow ergochromes and the red anthraquinone pigments endocrocin and clavorubin are products from the same PKS derived precursors and the latter are likely shunt products in the pathway of xanthone biosynthesis. It is proposed that atrochrysone carboxylic acid released from the PKS CPUR_05437 can also be converted to endocrocin anthrone which is further oxidized into endocrocin by CPUR_05435. Endocrocin could be then modified to clavorubin, possibly by CPUR_05423 and CPUR_05431. Clavorubin is the principal anthraquinone metabolite produced by the cluster with a much higher yield compared to endocrocin. In Claviceps purpurea (strain 20.1) (Ergot fungus), this protein is Short chain dehydrogenase CPUR_05429.